The primary structure comprises 645 residues: Matrix metalloproteinase-24 (645 aa).

A compositionally biased stretch (low complexity) spans 1–10; the sequence is MPRSRGGRAA. A disordered region spans residues 1–26; it reads MPRSRGGRAAPGPPPPPPPPGQAPRW. The N-terminal stretch at 1 to 52 is a signal peptide; that stretch reads MPRSRGGRAAPGPPPPPPPPGQAPRWSRWRVPGRLLLLLLPALCCLPGAARA. Pro residues predominate over residues 11-22; the sequence is PGPPPPPPPPGQ. A propeptide spanning residues 53–155 is cleaved from the precursor; the sequence is AAAAAGAGNR…HLSRRRRNKR (103 aa). The Extracellular segment spans residues 53–602; that stretch reads AAAAAGAGNR…INDVPGSVNA (550 aa). The Cysteine switch signature appears at 137 to 144; that stretch reads PRCGVPDH. 2 residues coordinate Zn(2+): Cys139 and His282. Residue Glu283 is part of the active site. 2 residues coordinate Zn(2+): His286 and His292. Residues 323–380 are disordered; that stretch reads QKIYGPPAEPLEPTRPLPTLPVRRIHSPSERKHERQPRPPRPPLGDRPSTPGTKPNIC. A compositionally biased stretch (pro residues) spans 329–341; sequence PAEPLEPTRPLPT. Positions 349–359 are enriched in basic and acidic residues; the sequence is SPSERKHERQP. 4 Hemopexin repeats span residues 377-425, 426-471, 473-521, and 522-569; these read PNIC…WKGL, PARI…GSCL, REGI…KGIP, and QAPQ…WMGC. A disulfide bridge connects residues Cys380 and Cys569. Residues 603 to 623 traverse the membrane as a helical segment; sequence VAVVIPCILSLCILVLVYTIF. Residues 624–645 lie on the Cytoplasmic side of the membrane; that stretch reads QFKNKTGPQPVTYYKRPVQEWV. Positions 643–645 match the PDZ-binding motif; sequence EWV.

Belongs to the peptidase M10A family. Interacts (via PDZ-binding motif) with APBA3 (via PDZ domain). Interacts with GRIP1 and GRIP2. The cofactor is Zn(2+). Ca(2+) serves as cofactor. Cleaved by a furin endopeptidase in the trans-Golgi network. Predominantly expressed in brain, kidney, pancreas and lung. Overexpressed in a series of brain tumors, including astrocytomas and glioblastomas.

It localises to the cell membrane. It is found in the golgi apparatus. Its subcellular location is the trans-Golgi network membrane. The protein localises to the secreted. The protein resides in the extracellular space. It localises to the extracellular matrix. Its function is as follows. Metalloprotease that mediates cleavage of N-cadherin (CDH2) and acts as a regulator of neuro-immune interactions and neural stem cell quiescence. Involved in cell-cell interactions between nociceptive neurites and mast cells, possibly by mediating cleavage of CDH2, thereby acting as a mediator of peripheral thermal nociception and inflammatory hyperalgesia. Key regulator of neural stem cells quiescence by mediating cleavage of CDH2, affecting CDH2-mediated anchorage of neural stem cells to ependymocytes in the adult subependymal zone, leading to modulate their quiescence. May play a role in axonal growth. Able to activate progelatinase A. May also be a proteoglycanase involved in degradation of proteoglycans, such as dermatan sulfate and chondroitin sulfate proteoglycans. Cleaves partially fibronectin, but not collagen type I, nor laminin. The polypeptide is Matrix metalloproteinase-24 (MMP24) (Homo sapiens (Human)).